The chain runs to 235 residues: Probable membrane-associated kinase regulator 6 (235 aa).

The segment at 108 to 140 is disordered; the sequence is SAATEEESEPLDTTTSEKIDTRGLNSKPSPTSS. The segment covering 130-140 has biased composition (polar residues); sequence GLNSKPSPTSS.

It is found in the cell membrane. May be involved in abscisic acid signaling by acting as a kinase regulator. The protein is Probable membrane-associated kinase regulator 6 (MAKR6) of Arabidopsis thaliana (Mouse-ear cress).